Reading from the N-terminus, the 64-residue chain is Large ribosomal subunit protein bL33 (64 aa).

Positions 16-25 (EARTSSEPRR) are enriched in basic and acidic residues. The interval 16-39 (EARTSSEPRRSNGISRYTTEKNKR) is disordered.

Belongs to the bacterial ribosomal protein bL33 family.

The polypeptide is Large ribosomal subunit protein bL33 (Prochlorococcus marinus (strain MIT 9515)).